Here is a 1142-residue protein sequence, read N- to C-terminus: Desmoglein-2.1 (1142 aa).

Residues 1–18 (MARRISPVVAFLLCFGLS) form the signal peptide. Residues 19-38 (HFFEAEARLQHSVALHRQKR) constitute a propeptide that is removed on maturation. Over 39 to 643 (EWIVPPQILE…AKKGSRLGPA (605 aa)) the chain is Extracellular. Cadherin domains are found at residues 64–148 (SDKE…APVF), 156–258 (VDEL…VPTL), 259–416 (GGPY…GPKF), and 417–527 (FPGT…CPTL). Asn-115 carries an N-linked (GlcNAc...) asparagine glycan. The interval 369 to 389 (SGAAGGAGAMGGASGSGGGTG) is disordered. N-linked (GlcNAc...) asparagine glycosylation is found at Asn-490 and Asn-576. A helical transmembrane segment spans residues 644–664 (GIGLLLLALLALLLIPLLLLL). Over 665 to 1142 (CTCGMTGAFT…RKVVTTQSVK (478 aa)) the chain is Cytoplasmic. Desmoglein repeat repeat units lie at residues 948-974 (VEQQ…NSGP), 975-998 (VAEG…ERMV), 999-1039 (LVFR…VLQG), and 1040-1071 (TIQR…NGIS).

Its subcellular location is the cell junction. The protein localises to the desmosome. The protein resides in the cell membrane. It localises to the cytoplasm. A component of desmosome cell-cell junctions which are required for positive regulation of cellular adhesion. Involved in the interaction of plaque proteins and intermediate filaments mediating cell-cell adhesion. Required for embryogenesis, specifically for progression of epiboly and normal convergence-extension movements during gastrulation. The polypeptide is Desmoglein-2.1 (Danio rerio (Zebrafish)).